The primary structure comprises 552 residues: 4-coumarate--CoA ligase-like 4 (552 aa).

The tract at residues 182–205 (ISATTPDPARRKDRVTQDDPATLL) is disordered. The span at 189–198 (PARRKDRVTQ) shows a compositional bias: basic and acidic residues. Positions 207, 208, 209, 210, 211, and 215 each coordinate ATP. Y256 is a (E)-4-coumaroyl-AMP binding site. K277 serves as a coordination point for CoA. An SBD1 region spans residues 279 to 346 (ELPEMLRSIN…EKYPQVEILQ (68 aa)). The (E)-4-coumaroyl-AMP site is built by G324, Q346, G347, and T351. Q346, G347, T351, D432, and R447 together coordinate ATP. The segment at 347-411 (GYGLTESTAI…IRGPYVMKGY (65 aa)) is SBD2. The (E)-4-coumaroyl-AMP site is built by K449 and K453. CoA is bound by residues K455 and G456. An ATP-binding site is contributed by K538.

This sequence belongs to the ATP-dependent AMP-binding enzyme family. Mg(2+) serves as cofactor.

The catalysed reaction is (E)-4-coumarate + ATP + CoA = (E)-4-coumaroyl-CoA + AMP + diphosphate. The enzyme catalyses (E)-4-coumarate + ATP + H(+) = (E)-4-coumaroyl-AMP + diphosphate. It carries out the reaction (E)-4-coumaroyl-AMP + CoA = (E)-4-coumaroyl-CoA + AMP + H(+). Carboxylate--CoA ligase that may use 4-coumarate as substrate. Follows a two-step reaction mechanism, wherein the carboxylate substrate first undergoes adenylation by ATP, followed by a thioesterification in the presence of CoA to yield the final CoA thioester. This chain is 4-coumarate--CoA ligase-like 4 (4CLL4), found in Oryza sativa subsp. japonica (Rice).